The chain runs to 91 residues: Pre-early 3 receptor internalization and degradation alpha protein (91 aa).

The Cytoplasmic segment spans residues 1–4 (MIPR). The propeptide at 1–22 (MIPRVLILLTLVALFCACSTLA) is signal peptide. The chain crosses the membrane as a helical span at residues 5–25 (VLILLTLVALFCACSTLAAVA). At 26 to 34 (HIEVDCIPP) the chain is on the lumenal side. Residues 35–60 (FTVYLLYGFVTLILICSLVTVVIAFI) form a helical membrane-spanning segment. The Cytoplasmic portion of the chain corresponds to 61-91 (QFIDWVCVRIAYLRHHPQYRDRTIADLLRIL).

The protein belongs to the adenoviridae E3-RID-alpha family. In terms of assembly, homodimer with only one chain cleaved by signal peptidase. Interacts with E3 RID-beta and E3 CR1-alpha. The signal peptide is only cleaved partially by host signal peptidase. This results in two forms of the protein, one uncleaved with two transmembrane regions, and one cleaved with one transmembrane region.

It localises to the host membrane. Its subcellular location is the host endoplasmic reticulum. Its function is as follows. Prevents infected cell apoptosis induced by the host immune system. Acts by down-regulating a number of cell surface receptors in the tumor necrosis factor (TNF) receptor superfamily, namely FAS, TNFRSF10A/TRAIL receptor 1, and TNFRSF10B/TRAIL receptor 2. Down-regulation of these death receptors protects adenovirus-infected cells from apoptosis induced by the death receptor ligands Fas ligand and TRAIL. RID complex also down-regulates certain tyrosine kinase cell surface receptors, especially the epidermal growth factor receptor (EGFR). RID-mediated Fas and EGFR down-regulation occurs via endocytosis of the receptors into endosomes followed by transport to and degradation within lysosomes. The chain is Pre-early 3 receptor internalization and degradation alpha protein from Homo sapiens (Human).